Reading from the N-terminus, the 372-residue chain is UDP-N-acetylglucosamine 2-epimerase (372 aa).

Substrate contacts are provided by residues Arg10, Lys15, Asp95, Glu117, His212, Gln270, Phe275, 289 to 291 (SGG), Glu295, and Arg312.

The protein belongs to the UDP-N-acetylglucosamine 2-epimerase family.

It catalyses the reaction UDP-N-acetyl-alpha-D-glucosamine = UDP-N-acetyl-alpha-D-mannosamine. It participates in capsule biogenesis; capsule polysaccharide biosynthesis. With respect to regulation, activated by UDP-GlcNAc and inhibited by 2-acetamidoglucal and UDP. Activity is strongly decreased in the presence of Co(2+) and abolished in the presence of Mn(2+) or Zn(2+). Its function is as follows. Catalyzes the interconversion between UDP-N-acetylglucosamine (UDP-GlcNAc) and UDP-N-acetylmannosamine (UDP-ManNAc). Involved in the biosynthesis of the capsular polysaccharides. In vitro, can also use several chemoenzymatically synthesized UDP-ManNAc derivatives as substrates, with lower efficiency. The chain is UDP-N-acetylglucosamine 2-epimerase from Neisseria meningitidis serogroup A / serotype 4A (strain DSM 15465 / Z2491).